The following is a 943-amino-acid chain: Conidiophore development regulator abaA (943 aa).

Disordered regions lie at residues 1 to 69 (MSSS…FNGG) and 111 to 133 (TSRQ…HQRG). A compositionally biased stretch (basic and acidic residues) spans 29-43 (IDTRRSFHGDSRLPL). The span at 59-68 (PSSAHSSFNG) shows a compositional bias: polar residues. The segment at residues 161–254 (QKDKGGVWRR…QVVKKFFEDL (94 aa)) is a DNA-binding region (TEA). Basic and acidic residues predominate over residues 537–555 (EHQRKKEKRSCGKKPDLER). Disordered stretches follow at residues 537-575 (EHQR…AAWT) and 809-901 (GAAG…HHPG). The segment covering 865 to 889 (DSWTAGSSAGGAPAATPTGPDWGPT) has biased composition (low complexity).

The protein belongs to the TEC1 family.

The protein localises to the nucleus. Its function is as follows. BrlA, abaA and wetA are pivotal regulators of conidiophore development and conidium maturation. They act individually and together to regulate their own expression and that of numerous other sporulation-specific genes. Binds to the sequence 5'-CATTCY-3', where Y is a pyrimidine, making both major- and minor-groove contacts. This Hapsidospora chrysogena (Acremonium chrysogenum) protein is Conidiophore development regulator abaA.